The chain runs to 991 residues: Valine--tRNA ligase (991 aa).

Residues Pro-43–His-53 carry the 'HIGH' region motif. The short motif at Lys-582–Ser-586 is the 'KMSKS' region element. Lys-585 serves as a coordination point for ATP. The segment at Ala-689–Arg-711 is disordered. Residues Ala-693–Ala-704 show a composition bias toward low complexity. Residues Leu-925–Arg-988 are a coiled coil.

Belongs to the class-I aminoacyl-tRNA synthetase family. ValS type 1 subfamily. As to quaternary structure, monomer.

The protein resides in the cytoplasm. It catalyses the reaction tRNA(Val) + L-valine + ATP = L-valyl-tRNA(Val) + AMP + diphosphate. Its function is as follows. Catalyzes the attachment of valine to tRNA(Val). As ValRS can inadvertently accommodate and process structurally similar amino acids such as threonine, to avoid such errors, it has a 'posttransfer' editing activity that hydrolyzes mischarged Thr-tRNA(Val) in a tRNA-dependent manner. This chain is Valine--tRNA ligase, found in Xylella fastidiosa (strain M12).